The sequence spans 554 residues: Nuclear division defective protein 1 (554 aa).

Disordered regions lie at residues 1-31 (MDRDISYQQNYTSTGATATSSRQPSTDNNAD) and 98-117 (IQQQQQQQQQQQQQQQALGS). Low complexity predominate over residues 98–113 (IQQQQQQQQQQQQQQQ). Thr319 carries the post-translational modification Phosphothreonine; by CDC28. Disordered regions lie at residues 410 to 475 (PTPN…GKKP) and 493 to 554 (SSSS…FNSQ). The span at 411 to 427 (TPNCNSLHSTTTGTSAL) shows a compositional bias: polar residues. The segment covering 448 to 465 (SSSNTVSFKSKSGNNNSK) has biased composition (low complexity). Over residues 466–475 (GRIKKNGKKP) the composition is skewed to basic residues. Over residues 493–513 (SSSSLSSSLNASSSAGNSNSN) the composition is skewed to low complexity. Residues 515–524 (TKKRASKLKR) show a composition bias toward basic residues. Over residues 525–536 (SQSLLSDSGSKS) the composition is skewed to low complexity. Over residues 539-554 (RKSCNSKSNGNLFNSQ) the composition is skewed to polar residues.

Forms an activator complex with FKH2. In terms of processing, phosphorylation of Thr-319 by CDC28 is required for the interaction with FKH2 and recruitment to promoters.

The protein resides in the cytoplasm. The protein localises to the nucleus. Functionally, transcription activator involved in G2/M transcription through its association with FKH2. This is Nuclear division defective protein 1 (NDD1) from Saccharomyces cerevisiae (strain ATCC 204508 / S288c) (Baker's yeast).